Reading from the N-terminus, the 314-residue chain is Acetyl-coenzyme A carboxylase carboxyl transferase subunit alpha (314 aa).

The region spanning 32–289 (EIDMLEASLK…KKMFLKHLNE (258 aa)) is the CoA carboxyltransferase C-terminal domain.

It belongs to the AccA family. As to quaternary structure, acetyl-CoA carboxylase is a heterohexamer composed of biotin carboxyl carrier protein (AccB), biotin carboxylase (AccC) and two subunits each of ACCase subunit alpha (AccA) and ACCase subunit beta (AccD).

It is found in the cytoplasm. The enzyme catalyses N(6)-carboxybiotinyl-L-lysyl-[protein] + acetyl-CoA = N(6)-biotinyl-L-lysyl-[protein] + malonyl-CoA. It functions in the pathway lipid metabolism; malonyl-CoA biosynthesis; malonyl-CoA from acetyl-CoA: step 1/1. In terms of biological role, component of the acetyl coenzyme A carboxylase (ACC) complex. First, biotin carboxylase catalyzes the carboxylation of biotin on its carrier protein (BCCP) and then the CO(2) group is transferred by the carboxyltransferase to acetyl-CoA to form malonyl-CoA. This chain is Acetyl-coenzyme A carboxylase carboxyl transferase subunit alpha, found in Staphylococcus epidermidis (strain ATCC 35984 / DSM 28319 / BCRC 17069 / CCUG 31568 / BM 3577 / RP62A).